Consider the following 218-residue polypeptide: UPF0177 protein YaiF (218 aa).

A run of 5 helical transmembrane segments spans residues 8–28, 48–68, 81–101, 123–143, and 163–183; these read SIIIATAFFLFILSQLPAVFL, FIILTLVVVTICIFIGIKCGF, ILLIFSLLIITFFIQKFVVQF, ILSSLLFPGQFVAVSILAPIL, and FFLSCFFFSYVHSGFSWDILG.

It belongs to the UPF0177 family.

It is found in the cell membrane. This is UPF0177 protein YaiF (yaiF) from Lactococcus lactis subsp. lactis (strain IL1403) (Streptococcus lactis).